The chain runs to 208 residues: Small ribosomal subunit protein uS4 (208 aa).

In terms of domain architecture, S4 RNA-binding spans 95–157 (RRIDNIVYRA…DSLKKLIRSN (63 aa)).

Belongs to the universal ribosomal protein uS4 family. As to quaternary structure, part of the 30S ribosomal subunit. Contacts protein S5. The interaction surface between S4 and S5 is involved in control of translational fidelity.

One of the primary rRNA binding proteins, it binds directly to 16S rRNA where it nucleates assembly of the body of the 30S subunit. Functionally, with S5 and S12 plays an important role in translational accuracy. The sequence is that of Small ribosomal subunit protein uS4 from Borrelia garinii subsp. bavariensis (strain ATCC BAA-2496 / DSM 23469 / PBi) (Borreliella bavariensis).